A 283-amino-acid polypeptide reads, in one-letter code: Acetylglutamate kinase (283 aa).

Substrate is bound by residues 63–64 (GG), arginine 85, and asparagine 178.

Belongs to the acetylglutamate kinase family. ArgB subfamily.

It localises to the cytoplasm. It catalyses the reaction N-acetyl-L-glutamate + ATP = N-acetyl-L-glutamyl 5-phosphate + ADP. Its pathway is amino-acid biosynthesis; L-arginine biosynthesis; N(2)-acetyl-L-ornithine from L-glutamate: step 2/4. Catalyzes the ATP-dependent phosphorylation of N-acetyl-L-glutamate. The sequence is that of Acetylglutamate kinase from Prochlorococcus marinus (strain MIT 9312).